The sequence spans 311 residues: Salutaridine reductase (311 aa).

NADP(+) contacts are provided by residues 21-24 (NKGI), Arg-44, 70-71 (DV), and Asn-98. The substrate site is built by Tyr-129 and Ser-180. NADP(+) is bound by residues Tyr-236, Lys-240, and 267–272 (VKTEMN). Residue Tyr-236 is the Proton acceptor of the active site. Cys-263 and Cys-305 form a disulfide bridge.

The protein belongs to the short-chain dehydrogenases/reductases (SDR) family.

It carries out the reaction (7S)-salutaridinol + NADP(+) = salutaridine + NADPH + H(+). It functions in the pathway alkaloid biosynthesis; morphine biosynthesis. Strong substrate inhibition. Was thought to be due to mutually exclusive productive and non-productive modes of substrate binding in the active site. Alternatively, SALR may undergo significant conformational changes during catalytic turnover. In terms of biological role, short-chain dehydrogenases/reductases involved in biosynthesis of morphinan-type benzylisoquinoline and opiate alkaloids natural products. Catalyzes specifically the stereospecific conversion of salutaridine to salutaridinol. The sequence is that of Salutaridine reductase from Papaver somniferum (Opium poppy).